A 247-amino-acid polypeptide reads, in one-letter code: Flagellin B1 (247 aa).

A propeptide spanning residues 1 to 20 (MNKLLRKVRKAFSLKADNKA) is cleaved from the precursor.

This sequence belongs to the archaeal flagellin family. Post-translationally, glycosylated.

The protein resides in the archaeal flagellum. Its function is as follows. Flagellin is the subunit protein which polymerizes to form the filaments of archaeal flagella. The sequence is that of Flagellin B1 from Thermoplasma volcanium (strain ATCC 51530 / DSM 4299 / JCM 9571 / NBRC 15438 / GSS1).